The primary structure comprises 249 residues: Methionine aminopeptidase 2 (249 aa).

His76 serves as a coordination point for substrate. 3 residues coordinate a divalent metal cation: Asp94, Asp105, and His168. His175 lines the substrate pocket. 2 residues coordinate a divalent metal cation: Glu202 and Glu233.

In terms of assembly, monomer. Requires Co(2+) as cofactor. It depends on Zn(2+) as a cofactor. The cofactor is Mn(2+). Fe(2+) is required as a cofactor.

It is found in the cytoplasm. It carries out the reaction Release of N-terminal amino acids, preferentially methionine, from peptides and arylamides.. Removes the N-terminal methionine from nascent proteins. The N-terminal methionine is often cleaved when the second residue in the primary sequence is small and uncharged (Met-Ala-, Cys, Gly, Pro, Ser, Thr, or Val). Requires deformylation of the N(alpha)-formylated initiator methionine before it can be hydrolyzed. This is Methionine aminopeptidase 2 from Bacillus subtilis (strain 168).